Here is a 134-residue protein sequence, read N- to C-terminus: Isocitrate dehydrogenase [NAD] subunit alpha, mitochondrial (134 aa).

Lysine 37 is subject to N6-succinyllysine. A Phosphothreonine modification is found at threonine 50. Residues arginine 64, arginine 74, and arginine 95 each contribute to the substrate site.

It belongs to the isocitrate and isopropylmalate dehydrogenases family. As to quaternary structure, heterooligomer of subunits alpha (IDH3A), beta (IDH3B), and gamma (IDH3G) in the apparent ratio of 2:1:1. The heterodimer containing one IDH3A and one IDH3B subunit and the heterodimer containing one IDH3A and one IDH3G subunit assemble into a heterotetramer (which contains two subunits of IDH3A, one of IDH3B and one of IDH3G) and further into the heterooctamer. It depends on Mg(2+) as a cofactor. Requires Mn(2+) as cofactor.

The protein resides in the mitochondrion. The catalysed reaction is D-threo-isocitrate + NAD(+) = 2-oxoglutarate + CO2 + NADH. The heterotetramer and the heterodimer composed of IDH3A and IDH3G subunits can be allosterically activated by citrate (CIT) or/and ADP, and the two activators can act independently or synergistically. The heterodimer composed of IDH3A and IDH3B subunits cannot be allosterically regulated and the allosteric regulation of the heterotetramer is through the IDH3G subunit and not the IDH3B subunit. The IDH3G subunit contains the allosteric site which consists of a CIT-binding site and an ADP-binding site, and the binding of CIT and ADP causes conformational changes at the allosteric site which are transmitted to the active site in the catalytic subunit (IDH3A) through a cascade of conformational changes at the heterodimer interface, leading to stabilization of the isocitrate-binding at the active site and thus activation of the enzyme. ATP can activate the heterotetramer and the heterodimer composed of IDH3A and IDH3G subunits at low concentrations but inhibits their activities at high concentrations, whereas ATP exhibits only inhibitory effect on the heterodimer composed of IDH3A and IDH3B subunits. Functionally, catalytic subunit of the enzyme which catalyzes the decarboxylation of isocitrate (ICT) into alpha-ketoglutarate. The heterodimer composed of the alpha (IDH3A) and beta (IDH3B) subunits and the heterodimer composed of the alpha (IDH3A) and gamma (IDH3G) subunits, have considerable basal activity but the full activity of the heterotetramer (containing two subunits of IDH3A, one of IDH3B and one of IDH3G) requires the assembly and cooperative function of both heterodimers. The protein is Isocitrate dehydrogenase [NAD] subunit alpha, mitochondrial of Mesocricetus auratus (Golden hamster).